Consider the following 313-residue polypeptide: Ketimine reductase mu-crystallin (313 aa).

3,3',5-triiodo-L-thyronine is bound at residue R47. NADPH-binding residues include S90, H91, R118, A143, V145, Q146, N167, R168, T169, N172, T204, M205, and V225. Position 256 (E256) interacts with 3,3',5-triiodo-L-thyronine. S291 contacts NADPH.

This sequence belongs to the ornithine cyclodeaminase/mu-crystallin family. As to quaternary structure, homodimer. Binds the thyroid hormone triiodothyronine (T3); T3 binding inhibits enzymatic activity. As to expression, expressed in the spiral ligament of the cochlea (at protein level).

The protein resides in the cytoplasm. It carries out the reaction L-pipecolate + NADP(+) = Delta(1)-piperideine-2-carboxylate + NADPH + H(+). The catalysed reaction is L-pipecolate + NAD(+) = Delta(1)-piperideine-2-carboxylate + NADH + H(+). The enzyme catalyses L-proline + NADP(+) = 1-pyrroline-2-carboxylate + NADPH + H(+). It catalyses the reaction L-proline + NAD(+) = 1-pyrroline-2-carboxylate + NADH + H(+). It carries out the reaction (3R)-1,4-thiomorpholine-3-carboxylate + NAD(+) = 3,4-dehydrothiomorpholine-3-carboxylate + NADH + 2 H(+). The catalysed reaction is (3R)-1,4-thiomorpholine-3-carboxylate + NADP(+) = 3,4-dehydrothiomorpholine-3-carboxylate + NADPH + 2 H(+). The enzyme catalyses (S)-cystathionine ketimine + NADH + 2 H(+) = (3R,5S)-2,3,5,6,7-pentahydro-1,4-thiazepine-3,5-dicarboxylate + NAD(+). It catalyses the reaction (S)-cystathionine ketimine + NADPH + 2 H(+) = (3R,5S)-2,3,5,6,7-pentahydro-1,4-thiazepine-3,5-dicarboxylate + NADP(+). It carries out the reaction (R)-lanthionine ketimine + NADPH + 2 H(+) = (3R,5R)-1,4-thiomorpholine-3,5-dicarboxylate + NADP(+). The catalysed reaction is Delta(2)-thiazoline-2-carboxylate + NADPH + 2 H(+) = L-thiazolidine-2-carboxylate + NADP(+). Functionally, catalyzes the NAD(P)H-dependent reduction of imine double bonds of a number of cyclic ketimine substrates, including sulfur-containing cyclic ketimines. Under physiological conditions, it efficiently catalyzes delta(1)-piperideine-2-carboxylate (P2C) and delta(1)-pyrroline-2-carboxylate (Pyr2C) reduction, suggesting a central role in lysine and glutamate metabolism. Additional substrates are delta(2)-thiazoline-2-carboxylate (T2C), 3,4-dehydrothiomorpholine-3-carboxylate (AECK), and (R)-lanthionine ketimine (LK) that is reduced at very low rate compared to other substrates. Also catalyzes the NAD(P)H-dependent reduction of (S)-cystathionine ketimine (CysK). This Mus musculus (Mouse) protein is Ketimine reductase mu-crystallin.